The primary structure comprises 317 residues: Olfactory receptor 2B11 (317 aa).

Over 1-29 the chain is Extracellular; it reads MKSDNHSFLGDSPKAFILLGVSDRPWLEL. N-linked (GlcNAc...) asparagine glycosylation is present at N5. The chain crosses the membrane as a helical span at residues 30-53; it reads PLFVVLLLSYVLAMLGNVAIILAS. Residues 54–61 are Cytoplasmic-facing; the sequence is RVDPQLHS. A helical transmembrane segment spans residues 62 to 83; sequence PMYIFLSHLSFLDLCYTTTTVP. At 84-104 the chain is on the extracellular side; the sequence is QMLVNMGSSQKTISYGGCTVQ. An intrachain disulfide couples C101 to C193. The helical transmembrane segment at 105-124 threads the bilayer; the sequence is YAVFHWLGCTECIVLAAMAL. Residues 125 to 143 lie on the Cytoplasmic side of the membrane; the sequence is DRYVAICKPLHYAVLMHRA. Residues 144–162 traverse the membrane as a helical segment; the sequence is LCQQLVALAWLSGFGNSFV. Topologically, residues 163-199 are extracellular; sequence QVVLTVQLPFCGRQVLNNFFCEVPAVIKLSCADTAVN. N-linked (GlcNAc...) asparagine glycosylation occurs at N199. A helical membrane pass occupies residues 200-223; the sequence is DTILAVLVAFFVLVPLALILLSYG. Over 224–240 the chain is Cytoplasmic; the sequence is FIARAVLRIQSSKGRHK. A helical membrane pass occupies residues 241–263; the sequence is AFGTCSSHLMIVSLFYLPAIYMY. Topologically, residues 264–276 are extracellular; that stretch reads LQPPSSYSQEQGK. Residues 277–296 form a helical membrane-spanning segment; sequence FISLFYSIITPTLNPFTYTL. Over 297–317 the chain is Cytoplasmic; that stretch reads RNKDMKGALRRLLARIWRLCG.

The protein belongs to the G-protein coupled receptor 1 family.

Its subcellular location is the cell membrane. Odorant receptor. This Homo sapiens (Human) protein is Olfactory receptor 2B11 (OR2B11).